Reading from the N-terminus, the 647-residue chain is Threonine--tRNA ligase (647 aa).

Residues 1 to 61 (MINITFPDGA…TEDGSIEIVT (61 aa)) form the TGS domain. Residues 242–540 (DHRKLGKELD…LIENYKGAFP (299 aa)) form a catalytic region. Positions 336, 387, and 517 each coordinate Zn(2+).

This sequence belongs to the class-II aminoacyl-tRNA synthetase family. In terms of assembly, homodimer. Zn(2+) is required as a cofactor.

It localises to the cytoplasm. The enzyme catalyses tRNA(Thr) + L-threonine + ATP = L-threonyl-tRNA(Thr) + AMP + diphosphate + H(+). Functionally, catalyzes the attachment of threonine to tRNA(Thr) in a two-step reaction: L-threonine is first activated by ATP to form Thr-AMP and then transferred to the acceptor end of tRNA(Thr). Also edits incorrectly charged L-seryl-tRNA(Thr). This is Threonine--tRNA ligase from Streptococcus pneumoniae (strain JJA).